The primary structure comprises 484 residues: Monocarboxylate transporter 2 (484 aa).

Residues 1–16 are Cytoplasmic-facing; it reads MPSETAVPPPHPIPPD. The chain crosses the membrane as a helical span at residues 17–37; sequence GGWGWVVVGAAFISIGFSYAF. Topologically, residues 38 to 60 are extracellular; the sequence is PKAVTVFFKDIQQIFQASYSEIA. A helical membrane pass occupies residues 61 to 81; sequence WISSIMLAVMYAGGPISSVLV. Over 82–87 the chain is Cytoplasmic; sequence NNYGSR. Residues 88–108 traverse the membrane as a helical segment; that stretch reads PVVIIGGLLCCTGMILASFSN. Residues 109–116 lie on the Extracellular side of the membrane; it reads SVLELYLT. Residues 117-137 form a helical membrane-spanning segment; the sequence is IGFIGGLGLAFNLQPALTIIG. Residues 138–144 lie on the Cytoplasmic side of the membrane; that stretch reads KYFYRRR. Residues 145 to 165 form a helical membrane-spanning segment; the sequence is PMANGLAMAGSPVFLSSLAPF. Over 166 to 174 the chain is Extracellular; that stretch reads NQYLFNSYG. The helical transmembrane segment at 175 to 195 threads the bilayer; sequence WKGSFLILGGIFLHSCVAGCL. Topologically, residues 196–245 are cytoplasmic; sequence MRPVQTSPRKSKSKSKVGSRQDGSMKKASKVSTAEKINRFLDFSLFKHRG. The interval 201–224 is disordered; the sequence is TSPRKSKSKSKVGSRQDGSMKKAS. Residues 246–266 form a helical membrane-spanning segment; sequence FLIYLSGNVIMFLGFFAPIIF. The Extracellular segment spans residues 267 to 282; it reads LAPYAKDKGVDEYNAA. A helical transmembrane segment spans residues 283 to 303; the sequence is LLLSVMAFVDMFARPTGGLIA. At 304 to 311 the chain is on the cytoplasmic side; that stretch reads NSKLIRPR. Residues 312–332 traverse the membrane as a helical segment; it reads IQYFFSFAIVFTGICHLLCPL. Residues 333-337 lie on the Extracellular side of the membrane; the sequence is ADTYP. Residues 338–358 traverse the membrane as a helical segment; the sequence is ALVVYSIFFGYGFGSVSSVLF. Over 359–372 the chain is Cytoplasmic; sequence ETLMDLVGPARFSS. A helical transmembrane segment spans residues 373–393; that stretch reads AVGLATIVECCPVLLGPPLAG. At 394–405 the chain is on the extracellular side; sequence KLVDKTKDYKYM. Residues 406–426 form a helical membrane-spanning segment; it reads YIASGTIVVISGIYLFIGNAI. At 427-484 the chain is on the cytoplasmic side; the sequence is NYRLLAKERKREKARKKKSATHPSRESEALSRSKQDDVSVKVSNPHNSPSDRERESNI. Positions 437 to 484 are disordered; it reads REKARKKKSATHPSRESEALSRSKQDDVSVKVSNPHNSPSDRERESNI. Basic and acidic residues-rich tracts occupy residues 449 to 465 and 475 to 484; these read PSRESEALSRSKQDDVS and PSDRERESNI.

This sequence belongs to the major facilitator superfamily. Monocarboxylate porter (TC 2.A.1.13) family. Homodimer. Interacts with GRID2IP. Interacts with EMB; interaction mediates SLC16A7 targeting to the plasma membrane. Interacts with isoform 2 of BSG. In terms of tissue distribution, abundant on the surface of hepatocytes. Present on parietal cells of the oxyntic gland of the stomach, on the basolateral surface of epithelial cells in the collecting ducts of the kidney, on sperm tails throughout the epididymis. Expressed in mitochondria-rich skeletal muscle fibers and cardiac myocytes (at protein level).

It is found in the cell membrane. Its subcellular location is the basolateral cell membrane. It localises to the cytoplasm. It catalyses the reaction pyruvate(out) + H(+)(out) = pyruvate(in) + H(+)(in). The enzyme catalyses 3-methyl-2-oxobutanoate(out) + H(+)(out) = 3-methyl-2-oxobutanoate(in) + H(+)(in). The catalysed reaction is (S)-lactate(in) + H(+)(in) = (S)-lactate(out) + H(+)(out). It carries out the reaction acetoacetate(out) + H(+)(out) = acetoacetate(in) + H(+)(in). It catalyses the reaction (R)-3-hydroxybutanoate(out) + H(+)(out) = (R)-3-hydroxybutanoate(in) + H(+)(in). The enzyme catalyses 4-methyl-2-oxopentanoate(out) + H(+)(out) = 4-methyl-2-oxopentanoate(in) + H(+)(in). The catalysed reaction is (S)-3-hydroxybutanoate(out) + H(+)(out) = (S)-3-hydroxybutanoate(in) + H(+)(in). Transport activity exhibits steep dependence on substrate concentration. Substrate concentration sensitivity of SLC16A7 arises from the strong inter-subunit cooperativity of the SLC16A7 dimer during transport. Inhibited by AR-C155858. In terms of biological role, proton-coupled monocarboxylate symporter. Catalyzes the rapid transport across the plasma membrane of monocarboxylates such as L-lactate, pyruvate and ketone bodies, acetoacetate, beta-hydroxybutyrate and acetate. Dimerization is functionally required and both subunits work cooperatively in transporting substrate. This Mesocricetus auratus (Golden hamster) protein is Monocarboxylate transporter 2 (SLC16A7).